Consider the following 219-residue polypeptide: Peroxiredoxin-5, mitochondrial (219 aa).

A mitochondrion-targeting transit peptide spans 1-57; the sequence is MRLGWLRVLGCRPGSVVSRATIVEGASTTAAGTRGCLEGILEWTFGGVRGFRSAAVA. Positions 61–219 constitute a Thioredoxin domain; the sequence is IKVGDAIPSV…SLAPNILSQL (159 aa). Lys80 carries the post-translational modification N6-acetyllysine. Lys88 carries the post-translational modification N6-acetyllysine; alternate. Lys88 is subject to N6-succinyllysine; alternate. Cys105 functions as the Cysteine sulfenic acid (-SOH) intermediate in the catalytic mechanism. Cys105 carries S-palmitoyl cysteine lipidation. Residues Cys105 and Cys209 are joined by a disulfide bond. N6-succinyllysine is present on Lys121. Ser187 is subject to Phosphoserine. Residues 217-219 carry the Microbody targeting signal motif; that stretch reads SQL.

The protein belongs to the peroxiredoxin family. Prx5 subfamily. As to quaternary structure, monomer. Post-translationally, S-palmitoylated. Palmitoylation occurs on the active site, inhibiting its reactivity; therefore PRDX5 palmitoylation status determines its antioxidant capacity. S-palmitoylated. Depalmitoylated by ABHD10.

It is found in the mitochondrion. Its subcellular location is the cytoplasm. The protein resides in the peroxisome matrix. It carries out the reaction a hydroperoxide + [thioredoxin]-dithiol = an alcohol + [thioredoxin]-disulfide + H2O. Functionally, thiol-specific peroxidase that catalyzes the reduction of hydrogen peroxide and organic hydroperoxides to water and alcohols, respectively. Plays a role in cell protection against oxidative stress by detoxifying peroxides and as sensor of hydrogen peroxide-mediated signaling events. The sequence is that of Peroxiredoxin-5, mitochondrial (PRDX5) from Bos taurus (Bovine).